The following is a 163-amino-acid chain: NADH-quinone oxidoreductase subunit I (163 aa).

4Fe-4S ferredoxin-type domains are found at residues 55-84 (RRYE…IESE) and 94-123 (TQYD…ETRV). 8 residues coordinate [4Fe-4S] cluster: C64, C67, C70, C74, C103, C106, C109, and C113.

Belongs to the complex I 23 kDa subunit family. As to quaternary structure, NDH-1 is composed of 14 different subunits. Subunits NuoA, H, J, K, L, M, N constitute the membrane sector of the complex. Requires [4Fe-4S] cluster as cofactor.

The protein localises to the cell inner membrane. The enzyme catalyses a quinone + NADH + 5 H(+)(in) = a quinol + NAD(+) + 4 H(+)(out). Functionally, NDH-1 shuttles electrons from NADH, via FMN and iron-sulfur (Fe-S) centers, to quinones in the respiratory chain. The immediate electron acceptor for the enzyme in this species is believed to be ubiquinone. Couples the redox reaction to proton translocation (for every two electrons transferred, four hydrogen ions are translocated across the cytoplasmic membrane), and thus conserves the redox energy in a proton gradient. The sequence is that of NADH-quinone oxidoreductase subunit I from Hydrogenovibrio crunogenus (strain DSM 25203 / XCL-2) (Thiomicrospira crunogena).